Reading from the N-terminus, the 490-residue chain is Transcription factor MYB101 (490 aa).

The interval 1 to 21 is disordered; that stretch reads MDGGGETTATATMEGRGLKKG. HTH myb-type domains follow at residues 15–67 and 68–122; these read GRGL…ANHL and RPNL…KRRQ. 2 consecutive DNA-binding regions (H-T-H motif) follow at residues 43–67 and 95–118; these read WNAV…ANHL and WARM…NTRM. Residues 168–206 form a disordered region; that stretch reads YTNSSNTSSSSSSFSSSSSQPSKRLRPDPLVSTNPGLNP. A compositionally biased stretch (low complexity) spans 169–186; it reads TNSSNTSSSSSSFSSSSS.

Present mostly in flowers, siliques and floral shoot tips. Expression is restricted to the subapical pith cells of both vegetative and flowering plants and to the hypocotyl hook. Expressed in pollen grains and pollen tube. Mostly expressed in mature pollen grains, and, to a lower extent, in inflorescences and siliques.

It localises to the nucleus. Functionally, transcription activator. Binds to 5'-CAACTGTC-3' and/or 5'-TAACAAA-3' motif in target gene promoter (e.g. alpha-amylase) to promote their expression. Positive regulator of abscisic acid (ABA) responses leading to growth arrest during seed germination. Promotes the expression of aleurone-related genes (e.g. CP1, CP, GASA1, BXL1 and BXL2) in seeds. Together with MYB33 and MYB65, promotes the programmed cell death (PCD) leading to vacuolation of protein storage vacuoles (PSVs) in the aleurone layers during seed germination. Maybe involved in the regulation of leaves lamina morphogenesis. Involved in pollen grain development. Together with MYB97 and MYB120, functions as a male factor that controls pollen tube-synergid interaction in fertilization. Required for pollen tube growth arrest and sperm cell release in the female gametophyte, probably via the regulation of pollen tube-specific gene expression. The protein is Transcription factor MYB101 of Arabidopsis thaliana (Mouse-ear cress).